The primary structure comprises 689 residues: Glycine--tRNA ligase beta subunit (689 aa).

It belongs to the class-II aminoacyl-tRNA synthetase family. Tetramer of two alpha and two beta subunits.

The protein resides in the cytoplasm. It catalyses the reaction tRNA(Gly) + glycine + ATP = glycyl-tRNA(Gly) + AMP + diphosphate. This is Glycine--tRNA ligase beta subunit from Shewanella halifaxensis (strain HAW-EB4).